The primary structure comprises 154 residues: Ribonuclease H (154 aa).

In terms of domain architecture, RNase H type-1 spans 9-150; sequence SHPHIIIYTD…ADALANKGVE (142 aa). Positions 18, 56, 78, and 142 each coordinate Mg(2+).

Belongs to the RNase H family. As to quaternary structure, monomer. Requires Mg(2+) as cofactor.

It localises to the cytoplasm. The catalysed reaction is Endonucleolytic cleavage to 5'-phosphomonoester.. Functionally, endonuclease that specifically degrades the RNA of RNA-DNA hybrids. The sequence is that of Ribonuclease H from Polynucleobacter asymbioticus (strain DSM 18221 / CIP 109841 / QLW-P1DMWA-1) (Polynucleobacter necessarius subsp. asymbioticus).